Consider the following 539-residue polypeptide: Dopamine receptor 2 (539 aa).

The Extracellular segment spans residues 1–113 (MVDDNGSSPE…LPNDRVGLLA (113 aa)). Asn-5, Asn-31, Asn-47, and Asn-68 each carry an N-linked (GlcNAc...) asparagine glycan. Residues 114–134 (FLFLFSFATVFGNSLVILAVI) form a helical membrane-spanning segment. Topologically, residues 135-145 (RERYLHTATNY) are cytoplasmic. A helical transmembrane segment spans residues 146–166 (FITSLAVADCLVGLVVMPFSA). The Extracellular portion of the chain corresponds to 167–189 (LYEVLENTWFFGTDWCDIWRSLD). A disulfide bond links Cys-182 and Cys-261. The helical transmembrane segment at 190 to 206 (VLFSTASILNLCVISLD) threads the bilayer. Residues 207-227 (RYWAITDPFSYPMRMTVKRAA) are Cytoplasmic-facing. The chain crosses the membrane as a helical span at residues 228–248 (GLIAAVWICSSAISFPAIVWW). The Extracellular portion of the chain corresponds to 249-266 (RAARDGEMPAYKCTFTEH). A helical transmembrane segment spans residues 267 to 287 (LGYLVFSSTISFYLPLLVMVF). The Cytoplasmic segment spans residues 288–420 (TYCRIYRAAV…FAKEKKAAKT (133 aa)). A disordered region spans residues 326–387 (GGTTRDQQNQ…EPDDEPLSAL (62 aa)). Over residues 337 to 352 (SGGGGGGGGGGGGGGS) the composition is skewed to gly residues. Basic residues predominate over residues 356-367 (SHSHSHHHHHNH). A helical membrane pass occupies residues 421–441 (LGIVMGVFIICWLPFFVVNLL). At 442–453 (SGFCIECIEHEE) the chain is on the extracellular side. The chain crosses the membrane as a helical span at residues 454-474 (IVSAIVTWLGWINSCMNPVIY). The Cytoplasmic segment spans residues 475–539 (ACWSRDFRRA…RHNSCEQTYI (65 aa)). 2 S-palmitoyl cysteine lipidation sites follow: Cys-492 and Cys-493.

Belongs to the G-protein coupled receptor 1 family. As to expression, expressed in both central and peripheral nervous systems.

The protein resides in the cell membrane. In terms of biological role, receptor for dopamine. The activity of this receptor is mediated by G proteins which activate adenylyl cyclase. Also capable of generating a calcium signal. In terms of antagonist responses, would be classed with the D1-like dopamine receptor group. This receptor is an attractive candidate for initiating biochemical cascades underlying olfactory learning. In Drosophila melanogaster (Fruit fly), this protein is Dopamine receptor 2 (Dop1R2).